Reading from the N-terminus, the 256-residue chain is Thiazole synthase (256 aa).

Lys-95 (schiff-base intermediate with DXP) is an active-site residue. Residues Gly-156, 182 to 183 (AG), and 204 to 205 (NT) each bind 1-deoxy-D-xylulose 5-phosphate.

This sequence belongs to the ThiG family. Homotetramer. Forms heterodimers with either ThiH or ThiS.

The protein localises to the cytoplasm. It carries out the reaction [ThiS sulfur-carrier protein]-C-terminal-Gly-aminoethanethioate + 2-iminoacetate + 1-deoxy-D-xylulose 5-phosphate = [ThiS sulfur-carrier protein]-C-terminal Gly-Gly + 2-[(2R,5Z)-2-carboxy-4-methylthiazol-5(2H)-ylidene]ethyl phosphate + 2 H2O + H(+). Its pathway is cofactor biosynthesis; thiamine diphosphate biosynthesis. Its function is as follows. Catalyzes the rearrangement of 1-deoxy-D-xylulose 5-phosphate (DXP) to produce the thiazole phosphate moiety of thiamine. Sulfur is provided by the thiocarboxylate moiety of the carrier protein ThiS. In vitro, sulfur can be provided by H(2)S. The protein is Thiazole synthase of Klebsiella pneumoniae subsp. pneumoniae (strain ATCC 700721 / MGH 78578).